A 482-amino-acid chain; its full sequence is MNGVEQTCASLRTQIAATEAKLADLKRELEIAEQAAASHKQNAADAEGGSERRWPLLDEEYRRYGRQMIVPQLGIQGQLKLRSAKVLIVGAGGLGCPAALYLAGAGVGTLGLVDGDAVESSNLHRQVLHRTRNIGKLKVDSAIEYLKELNPHSKYIAHREHLAPEAAPEIFSNYDLILDCTDNPATRYLISDTAVLLGKPLVSASALRTEGQLMVLNNPPRPAGDKTGGPCYRCVFPKPPPANTVTSCADGGIVGPVVGTMGVLQALEAIKVITADETTTPPPPSLHIFSAYSTPLFRTIKLRSRRPNCAVCSAEASVTVDTVRSGSTDYIFFCGTTGPENLLSPEERITPLEYRTRHHDKEEKEPTIIDVREKVQYDICSLENSINIPISTILASASSSMSNGDSLADGVPALPSWVPPDVASSQSTDPVYVVCRLGNDSQVAVKKLKELGLDQGGKRVVADIRGGFRAWKEQVDPEWPEY.

ATP contacts are provided by residues G93, D114, 121-125, K138, and 182-183; these read SNLHR and DN. Residues C231 and C234 each coordinate Zn(2+). C248 (glycyl thioester intermediate; for adenylyltransferase activity) is an active-site residue. Residues C309 and C312 each coordinate Zn(2+). The 119-residue stretch at 362–480 folds into the Rhodanese domain; it reads EEKEPTIIDV…WKEQVDPEWP (119 aa). C435 functions as the Cysteine persulfide intermediate; for sulfurtransferase activity in the catalytic mechanism.

In the N-terminal section; belongs to the HesA/MoeB/ThiF family. UBA4 subfamily. The cofactor is Zn(2+).

It localises to the cytoplasm. Its subcellular location is the cytosol. The enzyme catalyses [molybdopterin-synthase sulfur-carrier protein]-C-terminal Gly-Gly + ATP + H(+) = [molybdopterin-synthase sulfur-carrier protein]-C-terminal Gly-Gly-AMP + diphosphate. It catalyses the reaction [molybdopterin-synthase sulfur-carrier protein]-C-terminal Gly-Gly-AMP + S-sulfanyl-L-cysteinyl-[cysteine desulfurase] + AH2 = [molybdopterin-synthase sulfur-carrier protein]-C-terminal-Gly-aminoethanethioate + L-cysteinyl-[cysteine desulfurase] + A + AMP + 2 H(+). It participates in tRNA modification; 5-methoxycarbonylmethyl-2-thiouridine-tRNA biosynthesis. The protein operates within cofactor biosynthesis; molybdopterin biosynthesis. Functionally, plays a central role in 2-thiolation of mcm(5)S(2)U at tRNA wobble positions of cytosolic tRNA(Lys), tRNA(Glu) and tRNA(Gln). Also essential during biosynthesis of the molybdenum cofactor. Acts by mediating the C-terminal thiocarboxylation of sulfur carriers urm1 and mocs2a. Its N-terminus first activates urm1 and mocs2a as acyl-adenylates (-COAMP), then the persulfide sulfur on the catalytic cysteine is transferred to urm1 and mocs2a to form thiocarboxylation (-COSH) of their C-terminus. The reaction probably involves hydrogen sulfide that is generated from the persulfide intermediate and that acts as a nucleophile towards urm1 and mocs2a. Subsequently, a transient disulfide bond is formed. Does not use thiosulfate as sulfur donor; nfs1 probably acting as a sulfur donor for thiocarboxylation reactions. This chain is Adenylyltransferase and sulfurtransferase uba4, found in Aspergillus niger (strain ATCC MYA-4892 / CBS 513.88 / FGSC A1513).